Consider the following 327-residue polypeptide: Zinc transport protein ZntB (327 aa).

Over 1-273 the chain is Cytoplasmic; that stretch reads MEAIKGSDVN…ARRTYTMSLM (273 aa). A helical transmembrane segment spans residues 274–294; sequence AMVFLPSTFLTGLFGVNLGGI. Residues 295 to 300 lie on the Periplasmic side of the membrane; it reads PGGGWQ. A helical transmembrane segment spans residues 301–321; it reads FGFSIFCILLVVLIGGVALWL. The Cytoplasmic portion of the chain corresponds to 322-327; the sequence is HRSKWL.

It belongs to the CorA metal ion transporter (MIT) (TC 1.A.35) family.

The protein localises to the cell inner membrane. The enzyme catalyses Zn(2+)(out) + H(+)(out) = Zn(2+)(in) + H(+)(in). Zinc transporter. Acts as a Zn(2+):proton symporter, which likely mediates zinc ion uptake. The sequence is that of Zinc transport protein ZntB from Escherichia coli O139:H28 (strain E24377A / ETEC).